The following is a 697-amino-acid chain: MAGNKLLVYLLRRDLRATDNPILHHLATSDHGFTHLLPIYILPPHQIETSGFVVEGQKSPYPLAKSQVGRFWRCGPLRAKFQAECIWDVKKNFENIGSGMLIRIGKFDDVLKHLIKSLNEDHQSIDTVWMTEEPSKEELDDQTAVASVCSKEGIGFKLWHDEKYFIDDRDNGLKDPQDTPDVFTTYRKTQEPLRERPRPPLPRPQAGSLPSFPSWIPPQQAPFRIPDDYDEFERLLLEPVKAPIISDPPQFPEGAKSAHPFKGGETPAWDRLYHLIKSGAMTTYQETRNGLLGTEYSTKLSAFLAMGTITARSIHAELVKFEDGSEESYSRGFGFGKGENEGTRAVRFELLWRDYMRLCTFKFRTRLFKIDGFKGASGNYTKKWLTDREEDAEPDQNPTPAQVKDMIDRWIRGTTGMGLVDASQRELQLTGYTSNRARQNVASYLTKSLGIDWRLGAEYYEQSLIDYDTHSNWGNWQYQASCGNDPRSRSFNQVKQAFDYDQDGRFTRTWVNEVKSIDRLEHVFQICTCPKQELEKHGLSDNIMVTNPLKRIDFSVTKPRGNRRPYRWRKQGDRGRGGRGGRGGGTGNTSGNGDNRHNEPSPPNGGNRHNDFSPANGGSYMQGQPISGGYQQMAWRGNSHGLPSGRGYNSRQYMLDYSQQQQQPQHQLQHYYAHQQHQHPHPRQQQQQFYHQIPPHI.

Residues 5–164 (KLLVYLLRRD…GFKLWHDEKY (160 aa)) form the Photolyase/cryptochrome alpha/beta domain. Disordered regions lie at residues 170–215 (DNGL…FPSW) and 554–697 (FSVT…PPHI). Over residues 188–198 (KTQEPLRERPR) the composition is skewed to basic and acidic residues. The segment covering 560–569 (RGNRRPYRWR) has biased composition (basic residues). Positions 578–590 (GRGGRGGGTGNTS) are enriched in gly residues. Composition is skewed to low complexity over residues 659–675 (QQQQ…YAHQ) and 683–697 (RQQQ…PPHI).

Belongs to the DNA photolyase class-1 family. The cofactor is FAD. (6R)-5,10-methylene-5,6,7,8-tetrahydrofolate is required as a cofactor.

Functionally, may have a photoreceptor function. The sequence is that of Putative cryptochrome DASH from Gibberella zeae (strain ATCC MYA-4620 / CBS 123657 / FGSC 9075 / NRRL 31084 / PH-1) (Wheat head blight fungus).